A 187-amino-acid polypeptide reads, in one-letter code: Elongation factor P (187 aa).

Belongs to the elongation factor P family.

The protein localises to the cytoplasm. It participates in protein biosynthesis; polypeptide chain elongation. Involved in peptide bond synthesis. Stimulates efficient translation and peptide-bond synthesis on native or reconstituted 70S ribosomes in vitro. Probably functions indirectly by altering the affinity of the ribosome for aminoacyl-tRNA, thus increasing their reactivity as acceptors for peptidyl transferase. The sequence is that of Elongation factor P from Mycolicibacterium gilvum (strain PYR-GCK) (Mycobacterium gilvum (strain PYR-GCK)).